Consider the following 644-residue polypeptide: ATP-dependent zinc metalloprotease FtsH (644 aa).

Residues 1-4 (MAKN) are Cytoplasmic-facing. Residues 5–25 (LILWLVIAVVLMSVFQSFGPS) traverse the membrane as a helical segment. Topologically, residues 26–98 (ESNGRKVDYS…VGEPPEEPSL (73 aa)) are periplasmic. The helical transmembrane segment at 99–119 (LASIFISWFPMLLLIGVWIFF) threads the bilayer. Residues 120 to 644 (MRQMQGGGGK…NTMSEQLGDK (525 aa)) lie on the Cytoplasmic side of the membrane. An ATP-binding site is contributed by 192–199 (GPPGTGKT). Histidine 414 contributes to the Zn(2+) binding site. Glutamate 415 is a catalytic residue. Zn(2+)-binding residues include histidine 418 and aspartate 492. Residues 598-644 (VRPPAGWEEPGASNNAGDNGSPKAPRPVDEPRTPNPGNTMSEQLGDK) are disordered. The segment covering 632–644 (NPGNTMSEQLGDK) has biased composition (polar residues).

It in the central section; belongs to the AAA ATPase family. In the C-terminal section; belongs to the peptidase M41 family. In terms of assembly, homohexamer. The cofactor is Zn(2+).

It is found in the cell inner membrane. Functionally, acts as a processive, ATP-dependent zinc metallopeptidase for both cytoplasmic and membrane proteins. Plays a role in the quality control of integral membrane proteins. The chain is ATP-dependent zinc metalloprotease FtsH from Escherichia coli O157:H7.